A 622-amino-acid polypeptide reads, in one-letter code: Solute carrier family 2, facilitated glucose transporter member 12 (622 aa).

A disordered region spans residues Met-1–Cys-26. The Cytoplasmic segment spans residues Met-1–Thr-44. Residues Phe-45–Ile-65 form a helical membrane-spanning segment. At Ser-66–Glu-84 the chain is on the extracellular side. A helical membrane pass occupies residues Met-85–Ile-105. The Cytoplasmic portion of the chain corresponds to Asp-106–Arg-111. Residues Leu-112–Leu-132 traverse the membrane as a helical segment. At Ser-133–Arg-141 the chain is on the extracellular side. Residues Val-142–Ile-162 traverse the membrane as a helical segment. Topologically, residues Ala-163–Arg-168 are cytoplasmic. A helical transmembrane segment spans residues Gly-169–Ser-189. The Extracellular portion of the chain corresponds to Asn-190–Lys-201. Residue Asn-195 is glycosylated (N-linked (GlcNAc...) asparagine). A helical transmembrane segment spans residues Tyr-202–Pro-222. Topologically, residues Pro-223–Arg-282 are cytoplasmic. The helical transmembrane segment at Ile-283 to Phe-303 threads the bilayer. The Extracellular segment spans residues Tyr-304–Ser-321. Residues Leu-322–Val-342 form a helical membrane-spanning segment. Topologically, residues Asp-343–Thr-349 are cytoplasmic. Residues Phe-350 to Leu-370 form a helical membrane-spanning segment. At Asn-371–Ala-471 the chain is on the extracellular side. 4 N-linked (GlcNAc...) asparagine glycosylation sites follow: Asn-375, Asn-387, Asn-400, and Asn-405. Residues Ser-472–Leu-492 traverse the membrane as a helical segment. Residues Ser-493–Arg-503 lie on the Cytoplasmic side of the membrane. Residues Ala-504–Leu-524 form a helical membrane-spanning segment. Topologically, residues Thr-525 to Ser-533 are extracellular. A helical membrane pass occupies residues Trp-534–Ile-554. Residues Pro-555–Thr-622 are Cytoplasmic-facing.

This sequence belongs to the major facilitator superfamily. Sugar transporter (TC 2.A.1.1) family. Glucose transporter subfamily. In terms of tissue distribution, expressed in skeletal muscle, heart, brain, kidney, spleen, adipose tissues and to a lesser extent in small intestine and lung.

It is found in the cell membrane. Its subcellular location is the endomembrane system. The protein resides in the cytoplasm. The protein localises to the perinuclear region. The enzyme catalyses D-glucose(out) = D-glucose(in). Insulin-independent facilitative glucose transporter. The sequence is that of Solute carrier family 2, facilitated glucose transporter member 12 from Mus musculus (Mouse).